The sequence spans 189 residues: Peptidyl-tRNA hydrolase (189 aa).

Y15 contributes to the tRNA binding site. The active-site Proton acceptor is the H20. TRNA is bound by residues F66, N68, and N114.

The protein belongs to the PTH family. As to quaternary structure, monomer.

It localises to the cytoplasm. It catalyses the reaction an N-acyl-L-alpha-aminoacyl-tRNA + H2O = an N-acyl-L-amino acid + a tRNA + H(+). Hydrolyzes ribosome-free peptidyl-tRNAs (with 1 or more amino acids incorporated), which drop off the ribosome during protein synthesis, or as a result of ribosome stalling. Functionally, catalyzes the release of premature peptidyl moieties from peptidyl-tRNA molecules trapped in stalled 50S ribosomal subunits, and thus maintains levels of free tRNAs and 50S ribosomes. The polypeptide is Peptidyl-tRNA hydrolase (Streptococcus pneumoniae serotype 2 (strain D39 / NCTC 7466)).